A 205-amino-acid polypeptide reads, in one-letter code: MADYKHPLRVGVGGPVGSGKTALLEALCKAMRDQYQLAVVTNDIYTKEDQRILTEAGALEPDRIVGVETGGCPHTAIREDASMNLAAVETLSEKFGNLDLIFVESGGDNLSATFSPELADLTIYVIDVAEGEKIPRKGGPGITKSDFLVINKTDLAPYVGASLEVMERDTNRMRGERPWTFTNLKVGDGLNKIIGFLEDKGMLKV.

14 to 21 (GPVGSGKT) provides a ligand contact to GTP.

Belongs to the SIMIBI class G3E GTPase family. UreG subfamily. In terms of assembly, homodimer. UreD, UreF and UreG form a complex that acts as a GTP-hydrolysis-dependent molecular chaperone, activating the urease apoprotein by helping to assemble the nickel containing metallocenter of UreC. The UreE protein probably delivers the nickel.

The protein resides in the cytoplasm. Functionally, facilitates the functional incorporation of the urease nickel metallocenter. This process requires GTP hydrolysis, probably effectuated by UreG. The sequence is that of Urease accessory protein UreG from Enterobacter sp. (strain 638).